The following is a 443-amino-acid chain: Xaa-Pro dipeptidase (443 aa).

Mn(2+) is bound by residues aspartate 246, aspartate 257, histidine 339, glutamate 384, and glutamate 423.

This sequence belongs to the peptidase M24B family. Bacterial-type prolidase subfamily. It depends on Mn(2+) as a cofactor.

The catalysed reaction is Xaa-L-Pro dipeptide + H2O = an L-alpha-amino acid + L-proline. In terms of biological role, splits dipeptides with a prolyl residue in the C-terminal position. The polypeptide is Xaa-Pro dipeptidase (Shigella flexneri).